We begin with the raw amino-acid sequence, 139 residues long: Gonadotropin subunit beta-2 (139 aa).

Positions 1–24 (MFPLVLSLFLGATSDIWPLAPAEA) are cleaved as a signal peptide. 6 disulfide bridges follow: cysteine 30–cysteine 78, cysteine 44–cysteine 93, cysteine 47–cysteine 131, cysteine 55–cysteine 109, cysteine 59–cysteine 111, and cysteine 114–cysteine 121. N-linked (GlcNAc...) asparagine glycosylation occurs at asparagine 34.

This sequence belongs to the glycoprotein hormones subunit beta family. In terms of assembly, heterodimer of an alpha and a beta chain.

It localises to the secreted. Involved in gametogenesis and steroidogenesis. The protein is Gonadotropin subunit beta-2 (cgbb) of Morone saxatilis (Striped bass).